Consider the following 759-residue polypeptide: Phosphoribosylformylglycinamidine synthase subunit PurL (759 aa).

Histidine 46 is a catalytic residue. 2 residues coordinate ATP: tyrosine 49 and lysine 88. Mg(2+) is bound at residue glutamate 90. Substrate-binding positions include 91 to 94 (SHNH) and arginine 113. Histidine 92 serves as the catalytic Proton acceptor. Mg(2+) is bound at residue aspartate 114. Residue glutamine 237 coordinates substrate. Aspartate 265 contacts Mg(2+). 309–311 (ESQ) provides a ligand contact to substrate. The ATP site is built by aspartate 498 and glycine 535. Asparagine 536 provides a ligand contact to Mg(2+). Residue serine 538 coordinates substrate.

The protein belongs to the FGAMS family. Monomer. Part of the FGAM synthase complex composed of 1 PurL, 1 PurQ and 2 PurS subunits.

It is found in the cytoplasm. It catalyses the reaction N(2)-formyl-N(1)-(5-phospho-beta-D-ribosyl)glycinamide + L-glutamine + ATP + H2O = 2-formamido-N(1)-(5-O-phospho-beta-D-ribosyl)acetamidine + L-glutamate + ADP + phosphate + H(+). The protein operates within purine metabolism; IMP biosynthesis via de novo pathway; 5-amino-1-(5-phospho-D-ribosyl)imidazole from N(2)-formyl-N(1)-(5-phospho-D-ribosyl)glycinamide: step 1/2. Functionally, part of the phosphoribosylformylglycinamidine synthase complex involved in the purines biosynthetic pathway. Catalyzes the ATP-dependent conversion of formylglycinamide ribonucleotide (FGAR) and glutamine to yield formylglycinamidine ribonucleotide (FGAM) and glutamate. The FGAM synthase complex is composed of three subunits. PurQ produces an ammonia molecule by converting glutamine to glutamate. PurL transfers the ammonia molecule to FGAR to form FGAM in an ATP-dependent manner. PurS interacts with PurQ and PurL and is thought to assist in the transfer of the ammonia molecule from PurQ to PurL. The chain is Phosphoribosylformylglycinamidine synthase subunit PurL from Anaeromyxobacter sp. (strain K).